The chain runs to 299 residues: MAHRWINDLTPADITPRGAWMNRRQVMAGMAGAGLAAFAGSAQAETLEPNSWEEITSYNNFYEFGTGKDDPAAYAHLLKTVPWSIKIDGMVERPGDYDFQDILSEMTIEERIYRFRCVEAWSMVIPWNGFELADLLAMAGVQEGAKYVAFETLYRPEEMPGTRYPVLEWPYREGLRLDEAMHPLTLMATGIYGKPLPNQNGAPLRLVVPWKYGFKSIKSIVRITLTDREPPASWNMAIPNEYGFYSNVNPEVNHPRWSQASERRIGGGLFAKRQPTLMFNGYEKEVAGLYQGMDLAKYF.

The segment at residues Met-1–Ala-44 is a signal peptide (tat-type signal). Mo-molybdopterin contacts are provided by residues Asn-59, Tyr-62–Glu-63, Cys-117, Thr-152, Asn-200, Arg-205, and Ser-216–Lys-218.

It belongs to the MsrP family. As to quaternary structure, heterodimer of a catalytic subunit (MsrP) and a heme-binding subunit (MsrQ). Requires Mo-molybdopterin as cofactor. Predicted to be exported by the Tat system. The position of the signal peptide cleavage has not been experimentally proven.

Its subcellular location is the periplasm. It catalyses the reaction L-methionyl-[protein] + a quinone + H2O = L-methionyl-(S)-S-oxide-[protein] + a quinol. It carries out the reaction L-methionyl-[protein] + a quinone + H2O = L-methionyl-(R)-S-oxide-[protein] + a quinol. In terms of biological role, part of the MsrPQ system that repairs oxidized periplasmic proteins containing methionine sulfoxide residues (Met-O), using respiratory chain electrons. Thus protects these proteins from oxidative-stress damage caused by reactive species of oxygen and chlorine generated by the host defense mechanisms. MsrPQ is essential for the maintenance of envelope integrity under bleach stress, rescuing a wide series of structurally unrelated periplasmic proteins from methionine oxidation. The catalytic subunit MsrP is non-stereospecific, being able to reduce both (R-) and (S-) diastereoisomers of methionine sulfoxide. The polypeptide is Protein-methionine-sulfoxide reductase catalytic subunit MsrP (Ruegeria pomeroyi (strain ATCC 700808 / DSM 15171 / DSS-3) (Silicibacter pomeroyi)).